Consider the following 702-residue polypeptide: Polyribonucleotide nucleotidyltransferase (702 aa).

2 residues coordinate Mg(2+): Asp487 and Asp493. The region spanning 554-613 (PRLLTIKIHPDKIREVIGKGGSTIQAITKETGTQIDIQDDGTIVIASVNAIAAQAAKARI) is the KH domain. Residues 623–691 (GRIYEGKVAK…KQGRIRLSMK (69 aa)) enclose the S1 motif domain.

It belongs to the polyribonucleotide nucleotidyltransferase family. In terms of assembly, component of the RNA degradosome, which is a multiprotein complex involved in RNA processing and mRNA degradation. The cofactor is Mg(2+).

Its subcellular location is the cytoplasm. It carries out the reaction RNA(n+1) + phosphate = RNA(n) + a ribonucleoside 5'-diphosphate. Functionally, involved in mRNA degradation. Catalyzes the phosphorolysis of single-stranded polyribonucleotides processively in the 3'- to 5'-direction. The sequence is that of Polyribonucleotide nucleotidyltransferase from Stenotrophomonas maltophilia (strain R551-3).